Here is a 268-residue protein sequence, read N- to C-terminus: MRLSRRAATASALLLTPALALFGASAAVSAPRIQATDYVALGDSYSSGVGAGSYDSSSGSCKRSTKSYPALWAASHTGTRFNFTACSGARTGDVLAKQLTPVNSGTDLVSITIGGNDAGFADTMTTCNLQGESACLARIAKARAYIQQTLPAQLDQVYDAIDSRAPAAQVVVLGYPRFYKLGGSCAVGLSEKSRAAINAAADDINAVTAKRAADHGFAFGDVNTTFAGHELCSGAPWLHSVTLPVENSYHPTANGQSKGYLPVLNSAT.

The N-terminal stretch at 1-34 (MRLSRRAATASALLLTPALALFGASAAVSAPRIQ) is a signal peptide. Serine 44 (nucleophile) is an active-site residue. 3 cysteine pairs are disulfide-bonded: cysteine 61-cysteine 86, cysteine 127-cysteine 135, and cysteine 185-cysteine 232. Histidine 250 is an active-site residue.

As to quaternary structure, monomer.

The protein resides in the secreted. It catalyses the reaction a triacylglycerol + H2O = a diacylglycerol + a fatty acid + H(+). It carries out the reaction hexadecanoyl-CoA + H2O = hexadecanoate + CoA + H(+). Its activity is regulated as follows. Inhibited by 3,4-dichloroisocoumarin and tetrahydrolipstatin in the absence of substrate, but by phenylmethylsulfonyl fluoride (PMSF) only in the presence of substrate. Several water-miscible solvents enhance the lipase hydrolytic activity in vitro. Tetrahydrofuran and N,N-dimethylformamide (both 50%) inactivate the enzyme with t1/2 of 5 minutes and t1/2 of 2 hours, respectively. In terms of biological role, catalyzes the hydrolysis of p-nitrophenyl esters, alpha- and beta-naphthyl esters, and triacylglycerols, with a preference for medium acyl chain length (C8-C12). Shows a much higher hydrolysis rate of glycerol esters of unsaturated C16 and C18 fatty acids than that of their saturated counterparts, and a preference for cis double bond. Is also able to hydrolyze several natural oils and Tween detergents. Also displays thioesterase and phospholipase activities, towards palmitoyl-coenzyme A and diheptanoyl glycerophosphocholine, respectively. Shows transesterification activity of racemic 1-phenyl ethanol with vinyl acetate in hexane, proceeding with partial (R)-enantioselectivity. This chain is Lipase, found in Streptomyces rimosus.